Consider the following 337-residue polypeptide: Pseudouridine-5'-phosphate glycosidase (337 aa).

Glu-26 functions as the Proton donor in the catalytic mechanism. The substrate site is built by Lys-87 and Val-107. Asp-139 contacts Mn(2+). 141-143 lines the substrate pocket; sequence SAD. Lys-160 functions as the Nucleophile in the catalytic mechanism. The span at 306 to 325 shows a compositional bias: low complexity; the sequence is SSGPQAGAGAPGAEPGPARR. Residues 306 to 337 are disordered; the sequence is SSGPQAGAGAPGAEPGPARRTSPARAPSGEGW.

It belongs to the pseudouridine-5'-phosphate glycosidase family. In terms of assembly, homotrimer. Requires Mn(2+) as cofactor.

The catalysed reaction is D-ribose 5-phosphate + uracil = psi-UMP + H2O. Catalyzes the reversible cleavage of pseudouridine 5'-phosphate (PsiMP) to ribose 5-phosphate and uracil. Functions biologically in the cleavage direction, as part of a pseudouridine degradation pathway. This Methylobacterium nodulans (strain LMG 21967 / CNCM I-2342 / ORS 2060) protein is Pseudouridine-5'-phosphate glycosidase.